A 313-amino-acid chain; its full sequence is Nodulation protein D 3 (313 aa).

Residues 6 to 63 (LDLNLLVALDALMTKRSVTAAARSINLSQPAMSSAIARLRSYFQDELFRMQGRELITT) form the HTH lysR-type domain. The segment at residues 23–42 (VTAAARSINLSQPAMSSAIA) is a DNA-binding region (H-T-H motif).

It belongs to the LysR transcriptional regulatory family.

NodD regulates the expression of the nodABCFE genes which encode other nodulation proteins. NodD is also a negative regulator of its own expression. Binds flavonoids as inducers. This is Nodulation protein D 3 (nodD3) from Rhizobium meliloti (strain 1021) (Ensifer meliloti).